Consider the following 252-residue polypeptide: Triosephosphate isomerase (252 aa).

Position 10-12 (10-12 (NWK)) interacts with substrate. Histidine 96 functions as the Electrophile in the catalytic mechanism. Glutamate 168 (proton acceptor) is an active-site residue. Substrate is bound by residues glycine 174, serine 214, and 235 to 236 (GG).

It belongs to the triosephosphate isomerase family. As to quaternary structure, homodimer.

The protein resides in the cytoplasm. The enzyme catalyses D-glyceraldehyde 3-phosphate = dihydroxyacetone phosphate. It participates in carbohydrate biosynthesis; gluconeogenesis. It functions in the pathway carbohydrate degradation; glycolysis; D-glyceraldehyde 3-phosphate from glycerone phosphate: step 1/1. In terms of biological role, involved in the gluconeogenesis. Catalyzes stereospecifically the conversion of dihydroxyacetone phosphate (DHAP) to D-glyceraldehyde-3-phosphate (G3P). The polypeptide is Triosephosphate isomerase (Streptococcus thermophilus (strain CNRZ 1066)).